We begin with the raw amino-acid sequence, 182 residues long: Phospholipase A2 inhibitor gamma subunit A (182 aa).

8 cysteine pairs are disulfide-bonded: Cys-3–Cys-27, Cys-6–Cys-13, Cys-20–Cys-48, Cys-54–Cys-75, Cys-76–Cys-81, Cys-99–Cys-124, Cys-117–Cys-146, and Cys-150–Cys-172. Asn-157 carries an N-linked (GlcNAc...) asparagine glycan.

Belongs to the CNF-like-inhibitor family. As to quaternary structure, heterotrimer of 2 subunits A and 1 subunit B. Post-translationally, N-glycosylation is not important for activity, since deglycosylation does not change its PLA2 inhibitory activity. Expressed by the liver.

It localises to the secreted. In terms of biological role, strongly inhibits its own venom PLA2 and all other PLA2s tested including Elapid, Crotalid and Viperid venom PLA2s, as well as honeybee PLA2s. In Laticauda semifasciata (Black-banded sea krait), this protein is Phospholipase A2 inhibitor gamma subunit A.